The primary structure comprises 440 residues: D-serine dehydratase (440 aa).

Lysine 116 is modified (N6-(pyridoxal phosphate)lysine).

Belongs to the serine/threonine dehydratase family. DsdA subfamily. As to quaternary structure, monomer. The cofactor is pyridoxal 5'-phosphate.

It carries out the reaction D-serine = pyruvate + NH4(+). This is D-serine dehydratase from Salmonella typhimurium (strain LT2 / SGSC1412 / ATCC 700720).